The following is a 239-amino-acid chain: tRNA (guanine-N(1)-)-methyltransferase (239 aa).

Residues G108 and 127-132 (IGDYVL) each bind S-adenosyl-L-methionine.

It belongs to the RNA methyltransferase TrmD family. Homodimer.

Its subcellular location is the cytoplasm. It carries out the reaction guanosine(37) in tRNA + S-adenosyl-L-methionine = N(1)-methylguanosine(37) in tRNA + S-adenosyl-L-homocysteine + H(+). In terms of biological role, specifically methylates guanosine-37 in various tRNAs. This is tRNA (guanine-N(1)-)-methyltransferase from Lactobacillus helveticus (strain DPC 4571).